The following is a 118-amino-acid chain: Large ribosomal subunit protein bL19 (118 aa).

It belongs to the bacterial ribosomal protein bL19 family.

Its function is as follows. This protein is located at the 30S-50S ribosomal subunit interface and may play a role in the structure and function of the aminoacyl-tRNA binding site. In Serratia marcescens, this protein is Large ribosomal subunit protein bL19 (rplS).